The primary structure comprises 72 residues: SRY-related protein ADW5 (72 aa).

A DNA-binding region (HMG box) is located at residues 1-69 (VKRPMNAFMV…KHMADYPDYK (69 aa)).

It localises to the nucleus. This chain is SRY-related protein ADW5, found in Alligator mississippiensis (American alligator).